Reading from the N-terminus, the 296-residue chain is Ribosomal RNA small subunit methyltransferase H (296 aa).

S-adenosyl-L-methionine contacts are provided by residues 30 to 32 (GGH), D49, F76, D97, and Q104.

The protein belongs to the methyltransferase superfamily. RsmH family.

Its subcellular location is the cytoplasm. It carries out the reaction cytidine(1402) in 16S rRNA + S-adenosyl-L-methionine = N(4)-methylcytidine(1402) in 16S rRNA + S-adenosyl-L-homocysteine + H(+). Its function is as follows. Specifically methylates the N4 position of cytidine in position 1402 (C1402) of 16S rRNA. The protein is Ribosomal RNA small subunit methyltransferase H of Mesomycoplasma hyopneumoniae (strain 232) (Mycoplasma hyopneumoniae).